Consider the following 555-residue polypeptide: Meiotic mRNA stability protein kinase SSN3 (555 aa).

A Protein kinase domain is found at tyrosine 75–phenylalanine 463. Isoleucine 81–valine 89 serves as a coordination point for ATP. The span at threonine 100–leucine 138 shows a compositional bias: polar residues. Residues threonine 100–serine 166 are disordered. Residue lysine 183 coordinates ATP. Aspartate 286 acts as the Proton acceptor in catalysis.

Belongs to the protein kinase superfamily. CMGC Ser/Thr protein kinase family. CDC2/CDKX subfamily. In terms of assembly, component of the SRB8-11 complex which consists of SRB8, SSN2/SRB9, SSN3/SRB10 and SSN8/SRB11. The SRB8-11 complex associates with the Mediator complex. The SSN3/SRB10 and SSN8/SRB11 kinase-cyclin pair also associate with the RNA polymerase II holoenzyme. Interacts with TUP1.

The protein resides in the nucleus. The enzyme catalyses L-seryl-[protein] + ATP = O-phospho-L-seryl-[protein] + ADP + H(+). It carries out the reaction L-threonyl-[protein] + ATP = O-phospho-L-threonyl-[protein] + ADP + H(+). The catalysed reaction is [DNA-directed RNA polymerase] + ATP = phospho-[DNA-directed RNA polymerase] + ADP + H(+). Component of the SRB8-11 complex. The SRB8-11 complex is a regulatory module of the Mediator complex which is itself involved in regulation of basal and activated RNA polymerase II-dependent transcription. The SRB8-11 complex may be involved in the transcriptional repression of a subset of genes regulated by Mediator. It may inhibit the association of the Mediator complex with RNA polymerase II to form the holoenzyme complex. The SRB8-11 complex phosphorylates the C-terminal domain (CTD) of the largest subunit of RNA polymerase II RPB1 at serines 2 and 5. The SSN3/SRB10 and SSN8/SRB11 kinase-cyclin pair may also positively and negatively regulate numerous transcriptional activators in response to changes in nutritional and physiological conditions. Phosphorylates GCN4, promoting its ubiquitin-mediated degradation, and MSN2, promoting its nuclear exclusion. Phosphorylates STE12, thereby promoting its degradation and inhibition of filamentous growth. Phosphorylates GAL4, and this phosphorylation is required for efficient galactose-inducible transcription. Also phosphorylates BDF1 and the TAF2 subunit of the TFIID complex. This is Meiotic mRNA stability protein kinase SSN3 (SSN3) from Saccharomyces cerevisiae (strain ATCC 204508 / S288c) (Baker's yeast).